A 208-amino-acid polypeptide reads, in one-letter code: Glycerol-3-phosphate acyltransferase (208 aa).

5 helical membrane passes run 3–23 (IIIM…VIIG), 55–75 (IVMV…TLLF), 81–101 (YTLL…YIGF), 113–133 (ILLA…LLLV), and 155–175 (IFYY…LFIF).

Belongs to the PlsY family. As to quaternary structure, probably interacts with PlsX.

The protein localises to the cell membrane. It carries out the reaction an acyl phosphate + sn-glycerol 3-phosphate = a 1-acyl-sn-glycero-3-phosphate + phosphate. Its pathway is lipid metabolism; phospholipid metabolism. In terms of biological role, catalyzes the transfer of an acyl group from acyl-phosphate (acyl-PO(4)) to glycerol-3-phosphate (G3P) to form lysophosphatidic acid (LPA). This enzyme utilizes acyl-phosphate as fatty acyl donor, but not acyl-CoA or acyl-ACP. The protein is Glycerol-3-phosphate acyltransferase of Lactiplantibacillus plantarum (strain ATCC BAA-793 / NCIMB 8826 / WCFS1) (Lactobacillus plantarum).